A 61-amino-acid polypeptide reads, in one-letter code: MLNIFSLICICLNSALHSSSFFFAKLPEAYAFFNPIVDFMPVIPVLFFLLALVWQAAVSFR.

A propeptide spanning residues 1–24 (MLNIFSLICICLNSALHSSSFFFA) is cleaved from the precursor. A helical transmembrane segment spans residues 32-52 (FFNPIVDFMPVIPVLFFLLAL).

This sequence belongs to the PsbK family. PSII is composed of 1 copy each of membrane proteins PsbA, PsbB, PsbC, PsbD, PsbE, PsbF, PsbH, PsbI, PsbJ, PsbK, PsbL, PsbM, PsbT, PsbX, PsbY, PsbZ, Psb30/Ycf12, at least 3 peripheral proteins of the oxygen-evolving complex and a large number of cofactors. It forms dimeric complexes.

The protein localises to the plastid. The protein resides in the chloroplast thylakoid membrane. One of the components of the core complex of photosystem II (PSII). PSII is a light-driven water:plastoquinone oxidoreductase that uses light energy to abstract electrons from H(2)O, generating O(2) and a proton gradient subsequently used for ATP formation. It consists of a core antenna complex that captures photons, and an electron transfer chain that converts photonic excitation into a charge separation. This Drimys granadensis protein is Photosystem II reaction center protein K.